The chain runs to 488 residues: UDP-N-acetylmuramoyl-L-alanyl-D-glutamate--2,6-diaminopimelate ligase (488 aa).

UDP-N-acetyl-alpha-D-muramoyl-L-alanyl-D-glutamate is bound by residues leucine 24, serine 26, and 41–43 (HQV). 113–119 (GTNGKTT) contributes to the ATP binding site. Residues asparagine 154, 155–156 (TT), serine 182, glutamine 188, and arginine 190 contribute to the UDP-N-acetyl-alpha-D-muramoyl-L-alanyl-D-glutamate site. An N6-carboxylysine modification is found at lysine 222. Residues arginine 386, 410 to 413 (DNPR), glycine 461, and glutamate 465 contribute to the meso-2,6-diaminopimelate site. A Meso-diaminopimelate recognition motif motif is present at residues 410 to 413 (DNPR).

This sequence belongs to the MurCDEF family. MurE subfamily. The cofactor is Mg(2+). Carboxylation is probably crucial for Mg(2+) binding and, consequently, for the gamma-phosphate positioning of ATP.

It is found in the cytoplasm. It carries out the reaction UDP-N-acetyl-alpha-D-muramoyl-L-alanyl-D-glutamate + meso-2,6-diaminopimelate + ATP = UDP-N-acetyl-alpha-D-muramoyl-L-alanyl-gamma-D-glutamyl-meso-2,6-diaminopimelate + ADP + phosphate + H(+). It participates in cell wall biogenesis; peptidoglycan biosynthesis. Catalyzes the addition of meso-diaminopimelic acid to the nucleotide precursor UDP-N-acetylmuramoyl-L-alanyl-D-glutamate (UMAG) in the biosynthesis of bacterial cell-wall peptidoglycan. The chain is UDP-N-acetylmuramoyl-L-alanyl-D-glutamate--2,6-diaminopimelate ligase from Haemophilus influenzae (strain PittEE).